We begin with the raw amino-acid sequence, 204 residues long: Elongation factor Ts (204 aa).

Positions 87-90 (TDFV) are involved in Mg(2+) ion dislocation from EF-Tu.

Belongs to the EF-Ts family.

Its subcellular location is the cytoplasm. Its function is as follows. Associates with the EF-Tu.GDP complex and induces the exchange of GDP to GTP. It remains bound to the aminoacyl-tRNA.EF-Tu.GTP complex up to the GTP hydrolysis stage on the ribosome. The protein is Elongation factor Ts of Frankia casuarinae (strain DSM 45818 / CECT 9043 / HFP020203 / CcI3).